The following is a 299-amino-acid chain: Protein LacX, plasmid (299 aa).

The polypeptide is Protein LacX, plasmid (lacX) (Lactococcus lactis subsp. lactis (Streptococcus lactis)).